Reading from the N-terminus, the 139-residue chain is Transcription antitermination protein NusB (139 aa).

The protein belongs to the NusB family.

In terms of biological role, involved in transcription antitermination. Required for transcription of ribosomal RNA (rRNA) genes. Binds specifically to the boxA antiterminator sequence of the ribosomal RNA (rrn) operons. This Natranaerobius thermophilus (strain ATCC BAA-1301 / DSM 18059 / JW/NM-WN-LF) protein is Transcription antitermination protein NusB.